Reading from the N-terminus, the 100-residue chain is Large ribosomal subunit protein uL23 (100 aa).

The protein belongs to the universal ribosomal protein uL23 family. Part of the 50S ribosomal subunit. Contacts protein L29, and trigger factor when it is bound to the ribosome.

Its function is as follows. One of the early assembly proteins it binds 23S rRNA. One of the proteins that surrounds the polypeptide exit tunnel on the outside of the ribosome. Forms the main docking site for trigger factor binding to the ribosome. In Synechococcus sp. (strain CC9605), this protein is Large ribosomal subunit protein uL23.